Here is a 313-residue protein sequence, read N- to C-terminus: Porphobilinogen deaminase (313 aa).

The residue at position 242 (Cys-242) is an S-(dipyrrolylmethanemethyl)cysteine.

Belongs to the HMBS family. In terms of assembly, monomer. Requires dipyrromethane as cofactor.

The enzyme catalyses 4 porphobilinogen + H2O = hydroxymethylbilane + 4 NH4(+). Its pathway is porphyrin-containing compound metabolism; protoporphyrin-IX biosynthesis; coproporphyrinogen-III from 5-aminolevulinate: step 2/4. Functionally, tetrapolymerization of the monopyrrole PBG into the hydroxymethylbilane pre-uroporphyrinogen in several discrete steps. The polypeptide is Porphobilinogen deaminase (Escherichia coli O45:K1 (strain S88 / ExPEC)).